We begin with the raw amino-acid sequence, 417 residues long: Putative competence-damage inducible protein (417 aa).

This sequence belongs to the CinA family.

The polypeptide is Putative competence-damage inducible protein (Shouchella clausii (strain KSM-K16) (Alkalihalobacillus clausii)).